A 377-amino-acid chain; its full sequence is Homoserine O-acetyltransferase (377 aa).

Residues 48–347 form the AB hydrolase-1 domain; the sequence is NVVLIEHALT…PVGHDAFLTE (300 aa). The active-site Nucleophile is serine 143. Arginine 213 is a binding site for substrate. Catalysis depends on residues aspartate 311 and histidine 341. Aspartate 342 serves as a coordination point for substrate.

The protein belongs to the AB hydrolase superfamily. MetX family. As to quaternary structure, homodimer.

It localises to the cytoplasm. The enzyme catalyses L-homoserine + acetyl-CoA = O-acetyl-L-homoserine + CoA. Its pathway is amino-acid biosynthesis; L-methionine biosynthesis via de novo pathway; O-acetyl-L-homoserine from L-homoserine: step 1/1. In terms of biological role, transfers an acetyl group from acetyl-CoA to L-homoserine, forming acetyl-L-homoserine. This chain is Homoserine O-acetyltransferase, found in Corynebacterium glutamicum (strain ATCC 13032 / DSM 20300 / JCM 1318 / BCRC 11384 / CCUG 27702 / LMG 3730 / NBRC 12168 / NCIMB 10025 / NRRL B-2784 / 534).